Here is a 218-residue protein sequence, read N- to C-terminus: MFEYLIKFYPKILFIVEGTLVTLKYSVIAVIFGLVIGMLLAICKVNKNRALRLFANFYTSIFRGTPLLIQLSIIYFASPYIIGVKFSVFMAGAISFSLNSGAYVSEVIRAGINAVDKGQFEAAVALAIPKFLIMKDIILPQAVKNIFPSLVNELVNLVKESAIISMLGEMDLMRRAQIVSIETYNYFFPMFIAACCYYILVMLISFIAKIIEKKMIVN.

In terms of domain architecture, ABC transmembrane type-1 spans 19-208 (TLVTLKYSVI…ILVMLISFIA (190 aa)). 4 helical membrane-spanning segments follow: residues 25-45 (YSVI…ICKV), 57-79 (FYTS…FASP), 86-108 (FSVF…SEVI), and 187-207 (FFPM…ISFI).

The protein belongs to the binding-protein-dependent transport system permease family. HisMQ subfamily.

The protein resides in the cell inner membrane. Functionally, part of the binding-protein-dependent transport system for glutamine; probably responsible for the translocation of the substrate across the membrane. The chain is Putative glutamine transport system permease protein GlnP (glnP) from Rickettsia felis (strain ATCC VR-1525 / URRWXCal2) (Rickettsia azadi).